The chain runs to 874 residues: Alanine--tRNA ligase (874 aa).

The Zn(2+) site is built by His563, His567, Cys665, and His669.

This sequence belongs to the class-II aminoacyl-tRNA synthetase family. It depends on Zn(2+) as a cofactor.

It is found in the cytoplasm. The catalysed reaction is tRNA(Ala) + L-alanine + ATP = L-alanyl-tRNA(Ala) + AMP + diphosphate. Catalyzes the attachment of alanine to tRNA(Ala) in a two-step reaction: alanine is first activated by ATP to form Ala-AMP and then transferred to the acceptor end of tRNA(Ala). Also edits incorrectly charged Ser-tRNA(Ala) and Gly-tRNA(Ala) via its editing domain. This Actinobacillus succinogenes (strain ATCC 55618 / DSM 22257 / CCUG 43843 / 130Z) protein is Alanine--tRNA ligase.